A 748-amino-acid chain; its full sequence is ATP-dependent rRNA helicase SPB4 (748 aa).

The Q motif signature appears at 15–43 (WAKLNPPLSPWILDVINSMGFKNMTPVQA). The Helicase ATP-binding domain maps to 46–260 (IPRAVKNQDC…GLGLRNPVRI (215 aa)). 59-66 (AVTGSGKT) serves as a coordination point for ATP. The segment at 119–156 (ESEEETGDVEAHAPPFASSSRSPSPQTPDKPLFPLPML) is disordered. A compositionally biased stretch (low complexity) spans 132–142 (PPFASSSRSPS). Pro residues predominate over residues 143–152 (PQTPDKPLFP). A DEAD box motif is present at residues 207-210 (DEAD). In terms of domain architecture, Helicase C-terminal spans 295 to 460 (KTLQLIRLLL…KAQRSILDFL (166 aa)). Positions 614–748 (AQRADNQSSN…IGGGMFDDLE (135 aa)) are disordered. 2 stretches are compositionally biased toward basic and acidic residues: residues 626 to 669 (ARAE…KYEW) and 708 to 730 (EIGK…KESS). Residues 732–748 (GGAGGGGIGGGMFDDLE) show a composition bias toward gly residues.

Belongs to the DEAD box helicase family. DDX55/SPB4 subfamily. As to quaternary structure, component of pre-60S ribosomal complexes.

The protein localises to the nucleus. It localises to the nucleolus. It catalyses the reaction ATP + H2O = ADP + phosphate + H(+). Its function is as follows. ATP-binding RNA helicase involved in the biogenesis of 60S ribosomal subunits. Binds 90S pre-ribosomal particles and dissociates from pre-60S ribosomal particles after processing of 27SB pre-rRNA. Required for the normal formation of 18S rRNA through the processing of pre-rRNAs at sites A0, A1 and A2, and the normal formation of 25S and 5.8S rRNAs through the processing of pre-rRNAs at sites C1 and C2. The polypeptide is ATP-dependent rRNA helicase SPB4 (Cryptococcus neoformans var. neoformans serotype D (strain B-3501A) (Filobasidiella neoformans)).